The following is a 158-amino-acid chain: Snaclec jerdonuxin subunit alpha (158 aa).

The N-terminal stretch at 1-23 (MGRFTFVSFGLLVVFLSLSGTGA) is a signal peptide. Intrachain disulfides connect Cys27–Cys38, Cys55–Cys152, and Cys127–Cys144. The region spanning 34-153 (YDRYCYQAFS…CGTENPFVCK (120 aa)) is the C-type lectin domain.

It belongs to the snaclec family. As to quaternary structure, tetramer of 4 heterodimers of alpha and beta subunits; disulfide-linked. Expressed by the venom gland.

It localises to the secreted. Functionally, snaclec that strongly induces platelet aggregation, in a dose-dependent manner. This is Snaclec jerdonuxin subunit alpha from Protobothrops jerdonii (Jerdon's pitviper).